Reading from the N-terminus, the 309-residue chain is Sulfate adenylyltransferase subunit 2 (309 aa).

This sequence belongs to the PAPS reductase family. CysD subfamily. As to quaternary structure, heterodimer composed of CysD, the smaller subunit, and CysN.

The enzyme catalyses sulfate + ATP + H(+) = adenosine 5'-phosphosulfate + diphosphate. It functions in the pathway sulfur metabolism; hydrogen sulfide biosynthesis; sulfite from sulfate: step 1/3. Its function is as follows. With CysN forms the ATP sulfurylase (ATPS) that catalyzes the adenylation of sulfate producing adenosine 5'-phosphosulfate (APS) and diphosphate, the first enzymatic step in sulfur assimilation pathway. APS synthesis involves the formation of a high-energy phosphoric-sulfuric acid anhydride bond driven by GTP hydrolysis by CysN coupled to ATP hydrolysis by CysD. This Methylorubrum extorquens (strain CM4 / NCIMB 13688) (Methylobacterium extorquens) protein is Sulfate adenylyltransferase subunit 2.